Consider the following 482-residue polypeptide: tRNA sulfurtransferase (482 aa).

The region spanning 61–165 is the THUMP domain; it reads LTIRDALTRI…DDRLLLIKGR (105 aa). ATP-binding positions include 183-184, Lys-265, Gly-287, and Gln-296; that span reads LI. Cys-344 and Cys-456 are disulfide-bonded. Residues 404–482 form the Rhodanese domain; it reads CGPNDVILDI…GFNNVKVYRP (79 aa). Cys-456 acts as the Cysteine persulfide intermediate in catalysis.

The protein belongs to the ThiI family.

The protein resides in the cytoplasm. The catalysed reaction is [ThiI sulfur-carrier protein]-S-sulfanyl-L-cysteine + a uridine in tRNA + 2 reduced [2Fe-2S]-[ferredoxin] + ATP + H(+) = [ThiI sulfur-carrier protein]-L-cysteine + a 4-thiouridine in tRNA + 2 oxidized [2Fe-2S]-[ferredoxin] + AMP + diphosphate. It carries out the reaction [ThiS sulfur-carrier protein]-C-terminal Gly-Gly-AMP + S-sulfanyl-L-cysteinyl-[cysteine desulfurase] + AH2 = [ThiS sulfur-carrier protein]-C-terminal-Gly-aminoethanethioate + L-cysteinyl-[cysteine desulfurase] + A + AMP + 2 H(+). It participates in cofactor biosynthesis; thiamine diphosphate biosynthesis. Its function is as follows. Catalyzes the ATP-dependent transfer of a sulfur to tRNA to produce 4-thiouridine in position 8 of tRNAs, which functions as a near-UV photosensor. Also catalyzes the transfer of sulfur to the sulfur carrier protein ThiS, forming ThiS-thiocarboxylate. This is a step in the synthesis of thiazole, in the thiamine biosynthesis pathway. The sulfur is donated as persulfide by IscS. In Shigella dysenteriae serotype 1 (strain Sd197), this protein is tRNA sulfurtransferase.